Here is a 415-residue protein sequence, read N- to C-terminus: Lipoyl synthase, mitochondrial (415 aa).

Residues 1–32 constitute a mitochondrion transit peptide; it reads MAVSTSHFRSLCASSRSLSRTGIVAPISCRGY. The tract at residues 30 to 50 is disordered; sequence RGYATTEPSPSATSTTTTTTA. The span at 33–49 shows a compositional bias: low complexity; the sequence is ATTEPSPSATSTTTTTT. [4Fe-4S] cluster-binding residues include cysteine 132, cysteine 137, cysteine 143, cysteine 163, cysteine 167, cysteine 170, and serine 378. The Radical SAM core domain occupies 146-367; the sequence is GSDKSAATAT…RQRALDMGFL (222 aa).

It belongs to the radical SAM superfamily. Lipoyl synthase family. The cofactor is [4Fe-4S] cluster.

It is found in the mitochondrion. It catalyses the reaction [[Fe-S] cluster scaffold protein carrying a second [4Fe-4S](2+) cluster] + N(6)-octanoyl-L-lysyl-[protein] + 2 oxidized [2Fe-2S]-[ferredoxin] + 2 S-adenosyl-L-methionine + 4 H(+) = [[Fe-S] cluster scaffold protein] + N(6)-[(R)-dihydrolipoyl]-L-lysyl-[protein] + 4 Fe(3+) + 2 hydrogen sulfide + 2 5'-deoxyadenosine + 2 L-methionine + 2 reduced [2Fe-2S]-[ferredoxin]. The protein operates within protein modification; protein lipoylation via endogenous pathway; protein N(6)-(lipoyl)lysine from octanoyl-[acyl-carrier-protein]: step 2/2. Catalyzes the radical-mediated insertion of two sulfur atoms into the C-6 and C-8 positions of the octanoyl moiety bound to the lipoyl domains of lipoate-dependent enzymes, thereby converting the octanoylated domains into lipoylated derivatives. In Neosartorya fischeri (strain ATCC 1020 / DSM 3700 / CBS 544.65 / FGSC A1164 / JCM 1740 / NRRL 181 / WB 181) (Aspergillus fischerianus), this protein is Lipoyl synthase, mitochondrial.